Here is a 319-residue protein sequence, read N- to C-terminus: Malate dehydrogenase (319 aa).

Residues 10–15 and aspartate 34 each bind NAD(+); that span reads GAGNIG. Positions 83 and 89 each coordinate substrate. NAD(+)-binding positions include asparagine 96 and 119–121; that span reads ITN. The substrate site is built by asparagine 121 and arginine 152. Histidine 176 acts as the Proton acceptor in catalysis.

The protein belongs to the LDH/MDH superfamily. MDH type 3 family.

It carries out the reaction (S)-malate + NAD(+) = oxaloacetate + NADH + H(+). Functionally, catalyzes the reversible oxidation of malate to oxaloacetate. The protein is Malate dehydrogenase of Francisella novicida.